Consider the following 215-residue polypeptide: Phosphatidylserine decarboxylase proenzyme (215 aa).

S183 serves as the catalytic Schiff-base intermediate with substrate; via pyruvic acid. S183 is subject to Pyruvic acid (Ser); by autocatalysis.

It belongs to the phosphatidylserine decarboxylase family. PSD-A subfamily. As to quaternary structure, heterodimer of a large membrane-associated beta subunit and a small pyruvoyl-containing alpha subunit. It depends on pyruvate as a cofactor. Is synthesized initially as an inactive proenzyme. Formation of the active enzyme involves a self-maturation process in which the active site pyruvoyl group is generated from an internal serine residue via an autocatalytic post-translational modification. Two non-identical subunits are generated from the proenzyme in this reaction, and the pyruvate is formed at the N-terminus of the alpha chain, which is derived from the carboxyl end of the proenzyme. The post-translation cleavage follows an unusual pathway, termed non-hydrolytic serinolysis, in which the side chain hydroxyl group of the serine supplies its oxygen atom to form the C-terminus of the beta chain, while the remainder of the serine residue undergoes an oxidative deamination to produce ammonia and the pyruvoyl prosthetic group on the alpha chain.

Its subcellular location is the cell membrane. It carries out the reaction a 1,2-diacyl-sn-glycero-3-phospho-L-serine + H(+) = a 1,2-diacyl-sn-glycero-3-phosphoethanolamine + CO2. Its pathway is phospholipid metabolism; phosphatidylethanolamine biosynthesis; phosphatidylethanolamine from CDP-diacylglycerol: step 2/2. Functionally, catalyzes the formation of phosphatidylethanolamine (PtdEtn) from phosphatidylserine (PtdSer). The chain is Phosphatidylserine decarboxylase proenzyme from Symbiobacterium thermophilum (strain DSM 24528 / JCM 14929 / IAM 14863 / T).